The primary structure comprises 91 residues: PqqA binding protein (91 aa).

Belongs to the PqqD family. As to quaternary structure, monomer. Interacts with PqqE.

It functions in the pathway cofactor biosynthesis; pyrroloquinoline quinone biosynthesis. Functionally, functions as a PqqA binding protein and presents PqqA to PqqE, in the pyrroloquinoline quinone (PQQ) biosynthetic pathway. This is PqqA binding protein from Pseudomonas fluorescens (strain Pf0-1).